Consider the following 296-residue polypeptide: Phosphatidylglycerol--prolipoprotein diacylglyceryl transferase (296 aa).

Helical transmembrane passes span 10–30 (IAFS…LAAF), 57–77 (LLFY…MLFY), 92–112 (VWEG…ACWL), and 119–139 (LHFF…LGFG). Arg-140 contacts a 1,2-diacyl-sn-glycero-3-phospho-(1'-sn-glycerol). The next 3 membrane-spanning stretches (helical) occupy residues 194–214 (QLYE…TFSM), 220–240 (YALS…VEFV), and 254–274 (WLTM…ALLA).

This sequence belongs to the Lgt family.

It localises to the cell inner membrane. It catalyses the reaction L-cysteinyl-[prolipoprotein] + a 1,2-diacyl-sn-glycero-3-phospho-(1'-sn-glycerol) = an S-1,2-diacyl-sn-glyceryl-L-cysteinyl-[prolipoprotein] + sn-glycerol 1-phosphate + H(+). It participates in protein modification; lipoprotein biosynthesis (diacylglyceryl transfer). Its function is as follows. Catalyzes the transfer of the diacylglyceryl group from phosphatidylglycerol to the sulfhydryl group of the N-terminal cysteine of a prolipoprotein, the first step in the formation of mature lipoproteins. This Xanthomonas oryzae pv. oryzae (strain MAFF 311018) protein is Phosphatidylglycerol--prolipoprotein diacylglyceryl transferase.